Here is a 226-residue protein sequence, read N- to C-terminus: 2,3-bisphosphoglycerate-dependent phosphoglycerate mutase (226 aa).

Residues 8–15, 21–22, R58, 109–112, K120, 136–137, and 180–181 contribute to the substrate site; these read RHGQSVWN, TG, ERMY, RR, and GN. The Tele-phosphohistidine intermediate role is filled by H9. The active-site Proton donor/acceptor is E109.

This sequence belongs to the phosphoglycerate mutase family. BPG-dependent PGAM subfamily.

The catalysed reaction is (2R)-2-phosphoglycerate = (2R)-3-phosphoglycerate. The protein operates within carbohydrate degradation; glycolysis; pyruvate from D-glyceraldehyde 3-phosphate: step 3/5. Functionally, catalyzes the interconversion of 2-phosphoglycerate and 3-phosphoglycerate. This Chlamydia muridarum (strain MoPn / Nigg) protein is 2,3-bisphosphoglycerate-dependent phosphoglycerate mutase.